Here is a 66-residue protein sequence, read N- to C-terminus: UPF0370 protein CKO_00315 (66 aa).

The chain crosses the membrane as a helical span at residues 4-24 (LAKYWWILVLVFLVGVLINVI). The segment at 39 to 66 (KPELPPHRDFNDKWDDDDDWPKKDQPKK) is disordered. Residues 42-51 (LPPHRDFNDK) show a composition bias toward basic and acidic residues.

Belongs to the UPF0370 family.

It localises to the cell membrane. In Citrobacter koseri (strain ATCC BAA-895 / CDC 4225-83 / SGSC4696), this protein is UPF0370 protein CKO_00315.